We begin with the raw amino-acid sequence, 702 residues long: Polyribonucleotide nucleotidyltransferase (702 aa).

Residues aspartate 485 and aspartate 491 each contribute to the Mg(2+) site. Positions proline 552–isoleucine 612 constitute a KH domain. The 69-residue stretch at glycine 622–lysine 690 folds into the S1 motif domain.

Belongs to the polyribonucleotide nucleotidyltransferase family. Mg(2+) serves as cofactor.

Its subcellular location is the cytoplasm. The enzyme catalyses RNA(n+1) + phosphate = RNA(n) + a ribonucleoside 5'-diphosphate. In terms of biological role, involved in mRNA degradation. Catalyzes the phosphorolysis of single-stranded polyribonucleotides processively in the 3'- to 5'-direction. The polypeptide is Polyribonucleotide nucleotidyltransferase (Clostridium botulinum (strain ATCC 19397 / Type A)).